Here is a 340-residue protein sequence, read N- to C-terminus: Agmatinase, mitochondrial (340 aa).

Histidine 150, aspartate 173, histidine 175, aspartate 177, aspartate 264, and aspartate 266 together coordinate Mn(2+).

Belongs to the arginase family. Agmatinase subfamily. The cofactor is Mn(2+).

The protein localises to the mitochondrion. It carries out the reaction agmatine + H2O = urea + putrescine. Its pathway is amine and polyamine biosynthesis; putrescine biosynthesis via agmatine pathway; putrescine from agmatine: step 1/1. This Gallus gallus (Chicken) protein is Agmatinase, mitochondrial (AGMAT).